A 230-amino-acid chain; its full sequence is Orotidine 5'-phosphate decarboxylase (230 aa).

Substrate-binding positions include Asp10, Lys31, 58–67 (DLKLHDIPNT), Thr117, Arg179, Gln188, Gly208, and Arg209. Lys60 serves as the catalytic Proton donor. The disordered stretch occupies residues 177-196 (GIRPKDASSDDQKRITTPED). Residues 179-196 (RPKDASSDDQKRITTPED) show a composition bias toward basic and acidic residues.

Belongs to the OMP decarboxylase family. Type 1 subfamily. Homodimer.

It carries out the reaction orotidine 5'-phosphate + H(+) = UMP + CO2. It functions in the pathway pyrimidine metabolism; UMP biosynthesis via de novo pathway; UMP from orotate: step 2/2. Its function is as follows. Catalyzes the decarboxylation of orotidine 5'-monophosphate (OMP) to uridine 5'-monophosphate (UMP). The protein is Orotidine 5'-phosphate decarboxylase of Staphylococcus saprophyticus subsp. saprophyticus (strain ATCC 15305 / DSM 20229 / NCIMB 8711 / NCTC 7292 / S-41).